Reading from the N-terminus, the 142-residue chain is Putative FK506-binding protein 9-like protein (142 aa).

The 49-residue stretch at 1–49 (MDMGLREMCVGEKRTVIIPPHLGYGEAGVDGEVPGSAVLVFDIELLELV) folds into the PPIase FKBP-type domain. EF-hand domains are found at residues 60–95 (WNGE…QVAS) and 105–140 (DAEL…AKQD). Positions 118, 120, 122, 124, and 129 each coordinate Ca(2+).

The sequence is that of Putative FK506-binding protein 9-like protein (FKBP9P1) from Homo sapiens (Human).